The primary structure comprises 237 residues: Protein GrpE (237 aa).

2 disordered regions span residues 27-51 and 202-237; these read EDREAEASTSSGEASAEASQDLSET and AVSSGSPTSEPSPSDPATPKPEPESTPASPQNPQHS. Low complexity-rich tracts occupy residues 33 to 45 and 204 to 213; these read ASTSSGEASAEAS and SSGSPTSEPS. A compositionally biased stretch (polar residues) spans 227-237; sequence TPASPQNPQHS.

Belongs to the GrpE family. Homodimer.

The protein resides in the cytoplasm. Participates actively in the response to hyperosmotic and heat shock by preventing the aggregation of stress-denatured proteins, in association with DnaK and GrpE. It is the nucleotide exchange factor for DnaK and may function as a thermosensor. Unfolded proteins bind initially to DnaJ; upon interaction with the DnaJ-bound protein, DnaK hydrolyzes its bound ATP, resulting in the formation of a stable complex. GrpE releases ADP from DnaK; ATP binding to DnaK triggers the release of the substrate protein, thus completing the reaction cycle. Several rounds of ATP-dependent interactions between DnaJ, DnaK and GrpE are required for fully efficient folding. The polypeptide is Protein GrpE (Synechococcus sp. (strain JA-3-3Ab) (Cyanobacteria bacterium Yellowstone A-Prime)).